Reading from the N-terminus, the 405-residue chain is Divinyl chlorophyllide a 8-vinyl-reductase, chloroplastic (405 aa).

A chloroplast-targeting transit peptide spans Met-1–Ala-58.

It is found in the plastid. It localises to the chloroplast. It carries out the reaction protochlorophyllide a + NADP(+) = 3,8-divinyl protochlorophyllide a + NADPH + H(+). It participates in porphyrin-containing compound metabolism; chlorophyll biosynthesis. Its function is as follows. Catalyzes the conversion of divinyl chlorophyllide to monovinyl chlorophyllide. Reduces the 8-vinyl group of the tetrapyrrole to an ethyl group using NADPH as the reductant. Can use (3,8-divinyl)-chlorophyllide a (DV-Chlidea) &gt; (3,8-divinyl)-chlorophyll a (DV-Chla) &gt; (3,8-divinyl)-protochlorophyllide a (DV-Pchlidea) &gt; (3,8-divinyl)-magnesium-protoporphyrin IX monomethyl ester (DV-MPE) &gt; (3,8-divinyl)-magnesium-protoporphyrin IX (DV-Mg-Proto) as substrates. This chain is Divinyl chlorophyllide a 8-vinyl-reductase, chloroplastic (DVR), found in Oryza sativa subsp. indica (Rice).